The chain runs to 226 residues: MTTPNPGQRLGLLGRKVGMMRIFTDDGDAVPVTVLDVSNNRVAQIKTVETDGYSAVQVAFGARKASRVTKPEAGHLAKAGVESGELLQEFRVSAEVAAECKPGSQLPIAMFQAGQQVDVQGTTIGKGFAGTIKRHHFGSQRASHGNSRSHNVPGSISMAQDPGRVFPGKKMSGHLGDDTVTTQNLDVVRVDEARQLLLVKGAVPGAKGGFVTVRPAVKVKLKKGAN.

Position 160 is an N5-methylglutamine (Q160).

It belongs to the universal ribosomal protein uL3 family. Part of the 50S ribosomal subunit. Forms a cluster with proteins L14 and L19. Methylated by PrmB.

In terms of biological role, one of the primary rRNA binding proteins, it binds directly near the 3'-end of the 23S rRNA, where it nucleates assembly of the 50S subunit. The protein is Large ribosomal subunit protein uL3 of Leptothrix cholodnii (strain ATCC 51168 / LMG 8142 / SP-6) (Leptothrix discophora (strain SP-6)).